Consider the following 229-residue polypeptide: Heptaprenylglyceryl phosphate synthase (229 aa).

K12 serves as a coordination point for sn-glycerol 1-phosphate. Mg(2+) is bound by residues D14 and S40. Residues 159-164, G189, and 209-210 each bind sn-glycerol 1-phosphate; these read YLEYSG and GN.

Belongs to the GGGP/HepGP synthase family. Group I subfamily. As to quaternary structure, homodimer. Requires Mg(2+) as cofactor.

The catalysed reaction is sn-glycerol 1-phosphate + all-trans-heptaprenyl diphosphate = 3-heptaprenyl-sn-glycero-1-phosphate + diphosphate. It participates in membrane lipid metabolism; glycerophospholipid metabolism. Prenyltransferase that catalyzes in vivo the transfer of the heptaprenyl moiety of heptaprenyl pyrophosphate (HepPP; 35 carbon atoms) to the C3 hydroxyl of sn-glycerol-1-phosphate (G1P), producing heptaprenylglyceryl phosphate (HepGP). This reaction is an ether-bond-formation step in the biosynthesis of archaea-type G1P-based membrane lipids found in Bacillales. The protein is Heptaprenylglyceryl phosphate synthase of Bacillus cereus (strain B4264).